Consider the following 345-residue polypeptide: MLRNIIRFKGFGKGTSGGFLKPVSFRVQLTRCYRYDNGPSYRRFNNGEYSQKSSFKSILLDKSSRKYLALLFGGCSLFYYTHLDKAPVSDRSRFIWVSRPLELTIGNYTYKSIWRQTQQEILPPQHPLSIKIENIFMKIVEAAYKDPSVDNSLLDGIKWEIHVVNDPTASPNAFVLPGGKVFIFSSILPICANDDGIATVLAHEFAHQLARHTAENLSKAPIYSLLGLVLYTVTGAHAINNILLDGFLRMPASRQMETEADYIGLMIMSRACFQPQESIKVWERMANFEKQMNRGGVVNMEFLSTHPASTRRIENMSKWLPKANEIYEQSDCSSMGNYYKSFFSM.

Topologically, residues Met-1–Tyr-67 are mitochondrial matrix. A helical membrane pass occupies residues Leu-68–Val-88. Residues Ser-89–Met-345 are Mitochondrial intermembrane-facing. His-203 is a binding site for Zn(2+). Glu-204 is a catalytic residue. Zn(2+) contacts are provided by His-207 and Glu-257. A disulfide bridge links Cys-272 with Cys-332. The tract at residues Glu-314–Met-345 is required for protease activation.

This sequence belongs to the peptidase M48 family. Homooligomer. It depends on Zn(2+) as a cofactor. In terms of processing, forms a redox-dependent disulfide bond, which plays a structural role and regulates its conformational stability and activity.

It is found in the mitochondrion inner membrane. Protease activity is induced in response to various mitochondrial stress, such as changes in membrane potential, oxidative stress or chronic hyperpolarization, and depends on its C-terminal region. Its function is as follows. Protease that is part of the quality control system in the inner membrane of mitochondria. Activated in response to various mitochondrial stress, leading to the proteolytic cleavage of target proteins, such as OXA1 and COX1. Cleaves and thereby promotes the turnover of mistranslated or misfolded membrane proteins. Cleaves the misfolded multi-pass membrane protein OXA1. Involved in quality control of cytochrome oxidase assembly: mediates the cleavage of COX1 in cells lacking COA2. Required for the stability of the respiratory supercomplexes. Required for TOR signaling. The sequence is that of Mitochondrial metalloendopeptidase OMA1 from Saccharomyces cerevisiae (strain ATCC 204508 / S288c) (Baker's yeast).